Reading from the N-terminus, the 411-residue chain is Kelch domain-containing protein 10 (411 aa).

Kelch repeat units lie at residues 72-133 (NLYV…LHGH), 135-186 (LLVF…IIHG), 187-239 (FLYV…HDGQ), 240-288 (RIYV…RRCH), 296-342 (EVFI…AVTP), and 345-388 (CMYI…YFPQ).

It belongs to the KLHDC10 family. In terms of assembly, component of a CRL2 E3 ubiquitin-protein ligase complex, also named ECS (Elongin BC-CUL2/5-SOCS-box protein) complex, composed of CUL2, Elongin BC (ELOB and ELOC), RBX1 and substrate-specific adapter KLHDC10.

It functions in the pathway protein modification; protein ubiquitination. Substrate-recognition component of a Cul2-RING (CRL2) E3 ubiquitin-protein ligase complex of the DesCEND (destruction via C-end degrons) pathway, which recognizes a C-degron located at the extreme C terminus of target proteins, leading to their ubiquitination and degradation. The C-degron recognized by the DesCEND pathway is usually a motif of less than ten residues and can be present in full-length proteins, truncated proteins or proteolytically cleaved forms. The CRL2(KLHDC10) complex specifically recognizes proteins with a proline-glycine (Pro-Gly) or an alanine tail (CAT tail) at the C-terminus, leading to their ubiquitination and degradation. The CRL2(KLHDC10) complex is involved in the ribosome-associated quality control (RQC) pathway, which mediates the extraction of incompletely synthesized nascent chains from stalled ribosomes: CRL2(KLHDC10) acts downstream of NEMF and recognizes CAT tails associated with stalled nascent chains, leading to their ubiquitination and degradation. This chain is Kelch domain-containing protein 10, found in Xenopus laevis (African clawed frog).